A 283-amino-acid polypeptide reads, in one-letter code: MASGTTTTAVKIGIIGGTGLDDPEILEGRTEKYVDTPFGKPSDALILGKIKNVDCVLLARHGRQHTIMPSKVNYQANIWALKEEGCTHVIVTTACGSLREEIQPGDIVIIDQFIDRTTMRPQSFYDGSHSCARGVCHIPMAEPFCPKTREVLIETAKKLGLRCHSKGTMVTIEGPRFSSRAESFMFRTWGADVINMTTVPEVVLAKEAGICYASIAMATDYDCWKEHEEAVSVDRVLKTLKENANKAKSLLLTTIPQIGSTEWSETLHNLKNMAQFSVLLPRH.

Thr-18 provides a ligand contact to phosphate. At Lys-51 the chain carries N6-acetyllysine. Residues 60 to 61 (RH) and 93 to 94 (TA) each bind phosphate. Met-196 is a substrate binding site. Phosphate is bound at residue Thr-197. 220 to 222 (DYD) is a binding site for substrate.

The protein belongs to the PNP/MTAP phosphorylase family. MTAP subfamily. As to quaternary structure, homotrimer. Ubiquitously expressed.

The protein localises to the cytoplasm. It is found in the nucleus. It carries out the reaction S-methyl-5'-thioadenosine + phosphate = 5-(methylsulfanyl)-alpha-D-ribose 1-phosphate + adenine. Its pathway is amino-acid biosynthesis; L-methionine biosynthesis via salvage pathway; S-methyl-5-thio-alpha-D-ribose 1-phosphate from S-methyl-5'-thioadenosine (phosphorylase route): step 1/1. Its activity is regulated as follows. Inhibited by 5'-methylthiotubercin and 5'-chloroformycin. In terms of biological role, catalyzes the reversible phosphorylation of S-methyl-5'-thioadenosine (MTA) to adenine and 5-methylthioribose-1-phosphate. Involved in the breakdown of MTA, a major by-product of polyamine biosynthesis. Responsible for the first step in the methionine salvage pathway after MTA has been generated from S-adenosylmethionine. Has broad substrate specificity with 6-aminopurine nucleosides as preferred substrates. In Homo sapiens (Human), this protein is S-methyl-5'-thioadenosine phosphorylase.